Reading from the N-terminus, the 500-residue chain is MMCKAQEWLRVTALLFVARAVPAMVVPNATLLEKLLEKYMDEDGEWWTAKQRGKRAITDNDMQSILDLHNKLRSQVYPTASNMEYMTWDVELERSAESWAEMCLWEHGPASLLPSIGQNLGAHWGRYRPPTFHVQAWYDEVRDFSYPYENECDPYCPFRCSGPVCTHYTQVVWATSSRIGCAVNLCHNMNIWGQIWPKAVYLVCNYSPKGNWWGHAPYKHGRPCSACPPSFGGGCRENLCYKEGSDRYYTPREEETNEIERQQSQVHDTHVRTRSDDSDRNDVISTQQMSQIVSCEVRLRDQCKGTTCNRYECPAGCLDSKAKVIGSVHYEMQSSICRAAIHYGIIDNEGGWVDVTRQGRKHYFIKSNRNGIQTIGKYHSANSFTVSKVTVQAVTCETTVEQLCPFHKPASHCPRVYCPRNCMQSNPHYARVIGTRIYSDLSSICRAAVHAGVVRNHGGYVDVMPVDKRKMYTASFQNGIFSESLQNPTGGKAFRVFAVV.

The signal sequence occupies residues 1 to 23 (MMCKAQEWLRVTALLFVARAVPA). Positions 66 to 206 (LDLHNKLRSQ…PKAVYLVCNY (141 aa)) constitute an SCP domain. The segment at 258-281 (EIERQQSQVHDTHVRTRSDDSDRN) is disordered. LCCL domains lie at 289-384 (MSQI…ANSF) and 390-492 (TVQA…TGGK). Disulfide bonds link cysteine 295–cysteine 313, cysteine 317–cysteine 337, cysteine 396–cysteine 418, and cysteine 422–cysteine 445.

It belongs to the CRISP family.

The protein resides in the secreted. This is Cysteine-rich secretory protein LCCL domain-containing 1 (Crispld1) from Mus musculus (Mouse).